Consider the following 148-residue polypeptide: Large ribosomal subunit protein uL15 (148 aa).

Residues 1 to 30 show a composition bias toward basic residues; it reads MPSRLRKTRKLRGHVSHGHGRIGKHRKHPG. The tract at residues 1-37 is disordered; the sequence is MPSRLRKTRKLRGHVSHGHGRIGKHRKHPGGRGNAGG. His39 is subject to (3S)-3-hydroxyhistidine. Lys47 and Lys55 each carry N6-acetyllysine. Ser68 bears the Phosphoserine mark. Residue Lys110 is modified to N6-acetyllysine.

Belongs to the universal ribosomal protein uL15 family. As to quaternary structure, component of the large ribosomal subunit. Hydroxylated on His-39 by MINA.

Its subcellular location is the cytoplasm. Component of the large ribosomal subunit. The ribosome is a large ribonucleoprotein complex responsible for the synthesis of proteins in the cell. The sequence is that of Large ribosomal subunit protein uL15 (Rpl27a) from Mus musculus (Mouse).